The primary structure comprises 296 residues: N-acetylmuramic acid 6-phosphate etherase 2 (296 aa).

An SIS domain is found at isoleucine 55–lysine 218. Residue glutamate 83 is the Proton donor of the active site. Glutamate 114 is a catalytic residue.

Belongs to the GCKR-like family. MurNAc-6-P etherase subfamily. Homodimer.

The enzyme catalyses N-acetyl-D-muramate 6-phosphate + H2O = N-acetyl-D-glucosamine 6-phosphate + (R)-lactate. It functions in the pathway amino-sugar metabolism; N-acetylmuramate degradation. Specifically catalyzes the cleavage of the D-lactyl ether substituent of MurNAc 6-phosphate, producing GlcNAc 6-phosphate and D-lactate. The protein is N-acetylmuramic acid 6-phosphate etherase 2 of Lactiplantibacillus plantarum (strain ATCC BAA-793 / NCIMB 8826 / WCFS1) (Lactobacillus plantarum).